Reading from the N-terminus, the 340-residue chain is DNA-directed RNA polymerase subunit alpha (340 aa).

The alpha N-terminal domain (alpha-NTD) stretch occupies residues 1 to 236 (MSVIQKNWQE…DQLQLFINFE (236 aa)). Residues 252–340 (FNKNLLRKVD…DLAKKLEEPY (89 aa)) are alpha C-terminal domain (alpha-CTD).

The protein belongs to the RNA polymerase alpha chain family. Homodimer. The RNAP catalytic core consists of 2 alpha, 1 beta, 1 beta' and 1 omega subunit. When a sigma factor is associated with the core the holoenzyme is formed, which can initiate transcription.

It catalyses the reaction RNA(n) + a ribonucleoside 5'-triphosphate = RNA(n+1) + diphosphate. DNA-dependent RNA polymerase catalyzes the transcription of DNA into RNA using the four ribonucleoside triphosphates as substrates. This is DNA-directed RNA polymerase subunit alpha from Rhodospirillum rubrum (strain ATCC 11170 / ATH 1.1.1 / DSM 467 / LMG 4362 / NCIMB 8255 / S1).